A 37-amino-acid polypeptide reads, in one-letter code: Photosystem I reaction center subunit VIII (37 aa).

The helical transmembrane segment at 9 to 29 (SIFVPLVGLVFPAIAMASLFL) threads the bilayer.

It belongs to the PsaI family.

It is found in the plastid. It localises to the chloroplast thylakoid membrane. May help in the organization of the PsaL subunit. This is Photosystem I reaction center subunit VIII from Cucumis sativus (Cucumber).